The following is a 436-amino-acid chain: Proteasome-activating nucleotidase (436 aa).

Positions Lys-7–Lys-98 form a coiled coil. ATP-binding positions include Gly-223–Leu-228 and His-362. Residues Ala-434–His-436 are docks into pockets in the proteasome alpha-ring to cause gate opening.

Belongs to the AAA ATPase family. As to quaternary structure, homohexamer. The hexameric complex has a two-ring architecture resembling a top hat that caps the 20S proteasome core at one or both ends. Upon ATP-binding, the C-terminus of PAN interacts with the alpha-rings of the proteasome core by binding to the intersubunit pockets.

The protein localises to the cytoplasm. In terms of biological role, ATPase which is responsible for recognizing, binding, unfolding and translocation of substrate proteins into the archaeal 20S proteasome core particle. Is essential for opening the gate of the 20S proteasome via an interaction with its C-terminus, thereby allowing substrate entry and access to the site of proteolysis. Thus, the C-termini of the proteasomal ATPase function like a 'key in a lock' to induce gate opening and therefore regulate proteolysis. Unfolding activity requires energy from ATP hydrolysis, whereas ATP binding alone promotes ATPase-20S proteasome association which triggers gate opening, and supports translocation of unfolded substrates. In Methanopyrus kandleri (strain AV19 / DSM 6324 / JCM 9639 / NBRC 100938), this protein is Proteasome-activating nucleotidase.